A 959-amino-acid chain; its full sequence is Glycine dehydrogenase (decarboxylating) (959 aa).

Residue K704 is modified to N6-(pyridoxal phosphate)lysine.

The protein belongs to the GcvP family. As to quaternary structure, the glycine cleavage system is composed of four proteins: P, T, L and H. Pyridoxal 5'-phosphate is required as a cofactor.

The catalysed reaction is N(6)-[(R)-lipoyl]-L-lysyl-[glycine-cleavage complex H protein] + glycine + H(+) = N(6)-[(R)-S(8)-aminomethyldihydrolipoyl]-L-lysyl-[glycine-cleavage complex H protein] + CO2. Functionally, the glycine cleavage system catalyzes the degradation of glycine. The P protein binds the alpha-amino group of glycine through its pyridoxal phosphate cofactor; CO(2) is released and the remaining methylamine moiety is then transferred to the lipoamide cofactor of the H protein. The protein is Glycine dehydrogenase (decarboxylating) of Parasynechococcus marenigrum (strain WH8102).